The following is a 306-amino-acid chain: Protein-methionine-sulfoxide reductase catalytic subunit MsrP (306 aa).

A signal peptide (tat-type signal) is located at residues 1–44 (MLIRHAPDLTDNDVTGHGLYLRRRDFIGGAAGLGLMAAAGSASA). Mo-molybdopterin is bound by residues Asn-69, 72–73 (YE), Cys-127, Thr-162, Asn-210, Arg-215, and 226–228 (GIK).

The protein belongs to the MsrP family. Heterodimer of a catalytic subunit (MsrP) and a heme-binding subunit (MsrQ). Mo-molybdopterin is required as a cofactor. In terms of processing, predicted to be exported by the Tat system. The position of the signal peptide cleavage has not been experimentally proven.

It localises to the periplasm. It carries out the reaction L-methionyl-[protein] + a quinone + H2O = L-methionyl-(S)-S-oxide-[protein] + a quinol. The enzyme catalyses L-methionyl-[protein] + a quinone + H2O = L-methionyl-(R)-S-oxide-[protein] + a quinol. In terms of biological role, part of the MsrPQ system that repairs oxidized periplasmic proteins containing methionine sulfoxide residues (Met-O), using respiratory chain electrons. Thus protects these proteins from oxidative-stress damage caused by reactive species of oxygen and chlorine generated by the host defense mechanisms. MsrPQ is essential for the maintenance of envelope integrity under bleach stress, rescuing a wide series of structurally unrelated periplasmic proteins from methionine oxidation. The catalytic subunit MsrP is non-stereospecific, being able to reduce both (R-) and (S-) diastereoisomers of methionine sulfoxide. The sequence is that of Protein-methionine-sulfoxide reductase catalytic subunit MsrP from Caulobacter sp. (strain K31).